The following is a 486-amino-acid chain: D-mannonate oxidoreductase (486 aa).

Residue 25–36 (IVHLGCGAFHRA) coordinates NAD(+).

This sequence belongs to the mannitol dehydrogenase family. UxuB subfamily.

The enzyme catalyses D-mannonate + NAD(+) = keto-D-fructuronate + NADH + H(+). The protein operates within carbohydrate metabolism; pentose and glucuronate interconversion. In Escherichia coli (strain K12), this protein is D-mannonate oxidoreductase (uxuB).